A 121-amino-acid polypeptide reads, in one-letter code: Putative iron-sulfur cluster insertion protein ErpA (121 aa).

Cys-49, Cys-113, and Cys-115 together coordinate iron-sulfur cluster.

The protein belongs to the HesB/IscA family. Homodimer. The cofactor is iron-sulfur cluster.

Functionally, required for insertion of 4Fe-4S clusters. In Methylibium petroleiphilum (strain ATCC BAA-1232 / LMG 22953 / PM1), this protein is Putative iron-sulfur cluster insertion protein ErpA.